The primary structure comprises 343 residues: Probable dual-specificity RNA methyltransferase RlmN (343 aa).

Glu-91 serves as the catalytic Proton acceptor. In terms of domain architecture, Radical SAM core spans 97–326; the sequence is HPDRITACIS…AEIRREKGTD (230 aa). A disulfide bridge links Cys-104 with Cys-331. [4Fe-4S] cluster is bound by residues Cys-111, Cys-115, and Cys-118. S-adenosyl-L-methionine contacts are provided by residues 158–159, Ser-190, 213–215, and Asn-289; these read GE and SLH. The active-site S-methylcysteine intermediate is the Cys-331.

The protein belongs to the radical SAM superfamily. RlmN family. [4Fe-4S] cluster is required as a cofactor.

Its subcellular location is the cytoplasm. It catalyses the reaction adenosine(2503) in 23S rRNA + 2 reduced [2Fe-2S]-[ferredoxin] + 2 S-adenosyl-L-methionine = 2-methyladenosine(2503) in 23S rRNA + 5'-deoxyadenosine + L-methionine + 2 oxidized [2Fe-2S]-[ferredoxin] + S-adenosyl-L-homocysteine. The enzyme catalyses adenosine(37) in tRNA + 2 reduced [2Fe-2S]-[ferredoxin] + 2 S-adenosyl-L-methionine = 2-methyladenosine(37) in tRNA + 5'-deoxyadenosine + L-methionine + 2 oxidized [2Fe-2S]-[ferredoxin] + S-adenosyl-L-homocysteine. Its function is as follows. Specifically methylates position 2 of adenine 2503 in 23S rRNA and position 2 of adenine 37 in tRNAs. This is Probable dual-specificity RNA methyltransferase RlmN from Thermotoga maritima (strain ATCC 43589 / DSM 3109 / JCM 10099 / NBRC 100826 / MSB8).